Consider the following 157-residue polypeptide: C-type lectin 9a (157 aa).

A signal peptide spans Met-1–Ala-23. 3 disulfide bridges follow: Cys-27/Cys-38, Cys-55/Cys-151, and Cys-126/Cys-143. In terms of domain architecture, C-type lectin spans Tyr-34–Lys-152.

It belongs to the snaclec family. In terms of assembly, heteromultimer; disulfide-linked. In terms of tissue distribution, expressed by the venom gland.

Its subcellular location is the secreted. In terms of biological role, interferes with one step of hemostasis (modulation of platelet aggregation, or coagulation cascade, for example). The chain is C-type lectin 9a from Crotalus adamanteus (Eastern diamondback rattlesnake).